The primary structure comprises 360 residues: Peptide chain release factor 1 (360 aa).

Residue glutamine 237 is modified to N5-methylglutamine.

It belongs to the prokaryotic/mitochondrial release factor family. Methylated by PrmC. Methylation increases the termination efficiency of RF1.

It is found in the cytoplasm. Functionally, peptide chain release factor 1 directs the termination of translation in response to the peptide chain termination codons UAG and UAA. The polypeptide is Peptide chain release factor 1 (Pseudomonas putida (strain W619)).